A 316-amino-acid polypeptide reads, in one-letter code: 4-hydroxy-3-methylbut-2-enyl diphosphate reductase (316 aa).

Cys12 contacts [4Fe-4S] cluster. (2E)-4-hydroxy-3-methylbut-2-enyl diphosphate contacts are provided by His41 and His74. 2 residues coordinate dimethylallyl diphosphate: His41 and His74. Isopentenyl diphosphate contacts are provided by His41 and His74. A [4Fe-4S] cluster-binding site is contributed by Cys96. His124 contacts (2E)-4-hydroxy-3-methylbut-2-enyl diphosphate. His124 contributes to the dimethylallyl diphosphate binding site. His124 provides a ligand contact to isopentenyl diphosphate. Glu126 functions as the Proton donor in the catalytic mechanism. Position 167 (Thr167) interacts with (2E)-4-hydroxy-3-methylbut-2-enyl diphosphate. A [4Fe-4S] cluster-binding site is contributed by Cys197. (2E)-4-hydroxy-3-methylbut-2-enyl diphosphate is bound by residues Ser225, Ser226, Asn227, and Ser269. Residues Ser225, Ser226, Asn227, and Ser269 each contribute to the dimethylallyl diphosphate site. Residues Ser225, Ser226, Asn227, and Ser269 each coordinate isopentenyl diphosphate.

This sequence belongs to the IspH family. Homodimer. The cofactor is [4Fe-4S] cluster.

It carries out the reaction isopentenyl diphosphate + 2 oxidized [2Fe-2S]-[ferredoxin] + H2O = (2E)-4-hydroxy-3-methylbut-2-enyl diphosphate + 2 reduced [2Fe-2S]-[ferredoxin] + 2 H(+). The catalysed reaction is dimethylallyl diphosphate + 2 oxidized [2Fe-2S]-[ferredoxin] + H2O = (2E)-4-hydroxy-3-methylbut-2-enyl diphosphate + 2 reduced [2Fe-2S]-[ferredoxin] + 2 H(+). It participates in isoprenoid biosynthesis; dimethylallyl diphosphate biosynthesis; dimethylallyl diphosphate from (2E)-4-hydroxy-3-methylbutenyl diphosphate: step 1/1. It functions in the pathway isoprenoid biosynthesis; isopentenyl diphosphate biosynthesis via DXP pathway; isopentenyl diphosphate from 1-deoxy-D-xylulose 5-phosphate: step 6/6. In terms of biological role, catalyzes the conversion of 1-hydroxy-2-methyl-2-(E)-butenyl 4-diphosphate (HMBPP) into a mixture of isopentenyl diphosphate (IPP) and dimethylallyl diphosphate (DMAPP). Acts in the terminal step of the DOXP/MEP pathway for isoprenoid precursor biosynthesis. The polypeptide is 4-hydroxy-3-methylbut-2-enyl diphosphate reductase (Salmonella agona (strain SL483)).